Consider the following 1215-residue polypeptide: Metabotropic glycine receptor (1215 aa).

Positions 1 to 23 are cleaved as a signal peptide; the sequence is MGAMAYPLLLCLLLAQLGLGAVG. The interval 23–66 is disordered; sequence GASRDPQGRPDSPRERTPKGKPHAQQPGRASASDSSAPWSRSTD. Residues 24–417 are Extracellular-facing; that stretch reads ASRDPQGRPD…CFVQEDKYLR (394 aa). Basic and acidic residues predominate over residues 28 to 40; it reads PQGRPDSPRERTP. Residues 52-64 are compositionally biased toward low complexity; the sequence is ASASDSSAPWSRS. The segment at 85–281 is cache-like region; that stretch reads YLYTGDSHQL…CENGSYKPGW (197 aa). N98 and N143 each carry an N-linked (GlcNAc...) asparagine glycan. C99 and C272 form a disulfide bridge. Residues S172 and R173 each coordinate glycine. N215 carries N-linked (GlcNAc...) asparagine glycosylation. E271 contributes to the glycine binding site. The N-linked (GlcNAc...) asparagine glycan is linked to N274. Residue D307 participates in glycine binding. N-linked (GlcNAc...) asparagine glycosylation is present at N333. The chain crosses the membrane as a helical span at residues 418–439; the sequence is LAIISFQALCMLLDFVSMLVVY. Topologically, residues 440-451 are cytoplasmic; the sequence is HFRKAKSIRASG. Residues 452–474 form a helical membrane-spanning segment; that stretch reads LILLETILFGSLLLYFPVVILYF. At 475–478 the chain is on the extracellular side; the sequence is EPST. The chain crosses the membrane as a helical span at residues 479–501; the sequence is FRCILLRWARLLGFATVYGTVTL. Residues C481 and C573 are joined by a disulfide bond. Residues 502-525 are Cytoplasmic-facing; that stretch reads KLHRVLKVFLSRTAQRIPYMTGGR. Residues 526 to 547 form a helical membrane-spanning segment; the sequence is VMRMLAVILLVVFWFLIGWTSS. The Extracellular segment spans residues 548–576; it reads VCQNLEKQISLIGQGKTSDHLIFNMCLID. The helical transmembrane segment at 577–597 threads the bilayer; sequence RWDYMTAVAEFLFLLWGVYLC. Residues 598–611 lie on the Cytoplasmic side of the membrane; the sequence is YAVRTVPSAFHEPR. A helical transmembrane segment spans residues 612-633; the sequence is YMAVAVHNELIISAIFHTIRFV. Residues 634–642 lie on the Extracellular side of the membrane; the sequence is LASRLQSDW. The helical transmembrane segment at 643 to 664 threads the bilayer; it reads MLMLYFAHTHLTVTVTIGLLLI. The Cytoplasmic segment spans residues 665-1215; sequence PKFSHSSNNP…KEEIWDSFKV (551 aa). Residues S694, S705, and S708 each carry the phosphoserine modification. Positions 757–999 are disordered; sequence RITEIPETVS…LNPGTTQMKD (243 aa). Composition is skewed to basic and acidic residues over residues 769-781 and 819-828; these read CSKEDKEGADHGT and STYDHVRDQT. A Glycyl lysine isopeptide (Lys-Gly) (interchain with G-Cter in ubiquitin) cross-link involves residue K774. The residue at position 865 (S865) is a Phosphoserine. Basic and acidic residues predominate over residues 925 to 943; it reads VEERTKSQKPLPKDKETNR. Residue S946 is modified to Phosphoserine. The segment covering 979 to 998 has biased composition (polar residues); the sequence is QRVNPTTANSDLNPGTTQMK. 2 short sequence motifs (VCPWE motif) span residues 1006-1010 and 1071-1075; these read VCPWE and VCLWE. Phosphoserine is present on S1080. Residues 1117-1164 form a disordered region; it reads SEELPPKAVASKTENENLNQIGHQEKKTSSSEENVRGSYNSSNNFQQP. Over residues 1139–1151 the composition is skewed to basic and acidic residues; it reads HQEKKTSSSEENV. The segment covering 1153–1164 has biased composition (polar residues); it reads GSYNSSNNFQQP. The VCPWE motif 3 motif lies at 1171 to 1175; the sequence is VCPWE.

It belongs to the G-protein coupled receptor 3 family. Homodimer. Associates with the RGS7-GNB5 complex, promoting its localization to the cell membrane and regulating its GTPase activator activity. Interacts (via VCPWE motifs) with GNAO1. Interacts with GPC4. Interacts with EGFLAM.

It is found in the cell membrane. The protein resides in the postsynaptic cell membrane. Its subcellular location is the presynaptic cell membrane. The protein localises to the nucleus. Metabotropic receptor for glycine that controls synapse formation and function in the brain. Acts as an atypical G-protein coupled receptor that recruits and regulates the RGS7-GNB5 complex instead of activating G proteins. In absence of glycine ligand, promotes the GTPase activator activity of RGS7, increasing the GTPase activity of G protein alpha subunits, thereby driving them into their inactive GDP-bound form. Glycine-binding changes the conformation of the intracellular surface, inhibiting the GTPase activator activity of the RGS7-GNB5 complex, promoting G protein alpha subunits into their active GTP-bound form and regulating cAMP levels. Also able to bind taurine, a compound closely related to glycine, but with a two-fold lower affinity. Glycine receptor-dependent regulation of cAMP controls key ion channels, kinases and neurotrophic factors involved in neuronal excitability and synaptic transmission. Plays a pivotal role in regulating mood and cognition via its ability to regulate neuronal excitability in L2/L3 pyramidal neurons of the prefrontal cortex. Also involved in spatial learning by regulating hippocampal CA1 neuronal excitability. Acts as a synaptic organizer in the hippocampus, required for proper mossy fiber-CA3 neurocircuitry establishment, structure and function: induces presynaptic differentiation in contacting axons via its interaction with GPC4. In addition to glycine, may also act as a receptor for osteocalcin (BGLAP) hormone: osteocalcin-binding initiates a signaling response that prevents neuronal apoptosis in the hippocampus and regulates the synthesis of neurotransmitters. In Homo sapiens (Human), this protein is Metabotropic glycine receptor.